Here is a 759-residue protein sequence, read N- to C-terminus: RNA-binding protein 28 (759 aa).

Position 2 is an N-acetylalanine (Ala2). Positions 4–80 constitute an RRM 1 domain; that stretch reads LTLFVGRLPP…CKINVTVAKK (77 aa). Residues 84–105 form a disordered region; it reads NKTKEKGKNENSECPKKEPKAK. Basic and acidic residues predominate over residues 85-101; sequence KTKEKGKNENSECPKKE. The RRM 2 domain maps to 114-191; it reads ARLIIRNLSF…RTVAVDWAVA (78 aa). A Phosphoserine modification is found at Ser122. A disordered region spans residues 201–330; the sequence is VSAIGEEKSH…NKKKRKLPSD (130 aa). Residues 205–224 are compositionally biased toward basic and acidic residues; the sequence is GEEKSHESKHQESVKKKGRE. Acidic residues-rich tracts occupy residues 225 to 256 and 284 to 313; these read EEDMEEEENDDDDDDDDEEDGVFDDEDEEEEN and SEEDSDLEESDSIDDGEELAQSDTSTEEQE. 2 consecutive RRM domains span residues 335 to 419 and 487 to 597; these read KTVF…LAVT and TRLC…RSLQ. Ser397 carries the phosphoserine modification. A disordered region spans residues 594–759; the sequence is RSLQKMRSKP…LAKRSKWFDS (166 aa). The span at 615-640 shows a compositional bias: basic and acidic residues; that stretch reads PAKDQQQKAAQHHTEEQSKVPPEQKR. A Glycyl lysine isopeptide (Lys-Gly) (interchain with G-Cter in SUMO2) cross-link involves residue Lys653. The span at 689–698 shows a compositional bias: basic residues; that stretch reads VKPVHPKKPK. A compositionally biased stretch (polar residues) spans 700–715; the sequence is QINQWKQEKQQLSSEQ.

In terms of assembly, interacts with U1, U2, U4, U5, and U6 spliceosomal small nuclear RNAs (snRNAs). Ubiquitously expressed.

The protein resides in the nucleus. The protein localises to the nucleolus. In terms of biological role, nucleolar component of the spliceosomal ribonucleoprotein complexes. This is RNA-binding protein 28 (RBM28) from Homo sapiens (Human).